The primary structure comprises 353 residues: Adenine deaminase (353 aa).

Residues His-19, His-21, and His-208 each contribute to the Zn(2+) site. The active-site Proton donor is Glu-211. A Zn(2+)-binding site is contributed by Asp-289. Position 290 (Asp-290) interacts with substrate.

The protein belongs to the metallo-dependent hydrolases superfamily. Adenosine and AMP deaminases family. Adenine deaminase type 2 subfamily. Zn(2+) is required as a cofactor.

It is found in the cytoplasm. It localises to the nucleus. It catalyses the reaction adenine + H2O + H(+) = hypoxanthine + NH4(+). Its function is as follows. Catalyzes the hydrolytic deamination of adenine to hypoxanthine. Plays an important role in the purine salvage pathway and in nitrogen catabolism. The polypeptide is Adenine deaminase (Gibberella zeae (strain ATCC MYA-4620 / CBS 123657 / FGSC 9075 / NRRL 31084 / PH-1) (Wheat head blight fungus)).